The chain runs to 263 residues: Proteasome subunit alpha type-1 (263 aa).

Methionine 1 is modified (N-acetylmethionine). The residue at position 110 (serine 110) is a Phosphoserine; alternate. O-linked (GlcNAc) serine; alternate glycosylation occurs at serine 110. Lysine 115 participates in a covalent cross-link: Glycyl lysine isopeptide (Lys-Gly) (interchain with G-Cter in ubiquitin). Serine 177 is modified (phosphoserine). Lysine 208 participates in a covalent cross-link: Glycyl lysine isopeptide (Lys-Gly) (interchain with G-Cter in ubiquitin). Residues phenylalanine 232–histidine 263 are disordered. Residues proline 253–histidine 263 are compositionally biased toward basic and acidic residues.

Belongs to the peptidase T1A family. In terms of assembly, the 26S proteasome consists of a 20S proteasome core and two 19S regulatory subunits. The 20S proteasome core is a barrel-shaped complex made of 28 subunits that are arranged in four stacked rings. The two outer rings are each formed by seven alpha subunits, and the two inner rings are formed by seven beta subunits. The proteolytic activity is exerted by three beta-subunits PSMB5, PSMB6 and PSMB7. Interacts with NOTCH3. Interacts with ZFAND1. C-terminal extension is partially cleaved off by limited proteolysis leading to a conversion of the proteasome from its latent into its active form. Detected in liver (at protein level).

Its subcellular location is the cytoplasm. The protein resides in the nucleus. In terms of biological role, component of the 20S core proteasome complex involved in the proteolytic degradation of most intracellular proteins. This complex plays numerous essential roles within the cell by associating with different regulatory particles. Associated with two 19S regulatory particles, forms the 26S proteasome and thus participates in the ATP-dependent degradation of ubiquitinated proteins. The 26S proteasome plays a key role in the maintenance of protein homeostasis by removing misfolded or damaged proteins that could impair cellular functions, and by removing proteins whose functions are no longer required. Associated with the PA200 or PA28, the 20S proteasome mediates ubiquitin-independent protein degradation. This type of proteolysis is required in several pathways including spermatogenesis (20S-PA200 complex) or generation of a subset of MHC class I-presented antigenic peptides (20S-PA28 complex). The polypeptide is Proteasome subunit alpha type-1 (Psma1) (Mus musculus (Mouse)).